The chain runs to 856 residues: MDDDEIIPKKNHPSNERNKKKAILSHEDFTGEDSLMENHLELRDKLTEDIVTIKASLKNNLVCSTLNENEILALSNYMQFFVFKSGDMVIKQGEKGSYFFIINSGKFDVYVNDKKVKTLTKGSSFGEAALIHNTQRSATIKAGTNGTLWGVQRSTFRATLKQLSNRNFNENRSFIDSVSVFDMLTEAQKNMITNACVIQNFKPGETIVKQGDYGDVLYILKDGKATVYINDEEIRVLEKGSYFGERALLYDEPRSATIIAKEVTSCASICRKLLNVVLGNLQVVLFRNIMTEALQQSEIFKQISPDQLNDLADTAIVRDYPANYNILHKDKIKSVKYIIVLEGKVELFLDDESIGILTRGKSFGDQYVLNQKQKFKHTLKSLEVCKIALITESCLADCLGNNNIDASIDYNNKKSIIKKMYIFRYLTDKQCNLLIEAFKTTRYEEGDYIIQEGEVGSRFYIIKAGEVEIVKNNKRLRTLGKNDYFGERALIYDEPRTASVISTVNNLECWYVDKSVFLQIIEGPMLAHLEERIKMQDTKVEMSELLTERIIGRGTFGIVKLVLHEPTKIRYALKCVSKKSIIELNQQNNIKLEREITAENDHPFIIRLVRTFKDSKYFYFLTELVTGGELYDAIRKLGLLSRSQAQFYLGSIILAIEYLHERSIVYRDLKPENILLDKQGYVKLIDFGCAKKIHGRSYTLVGTPHYMAPEVILGKGYGCTVDIWAFGVCLYEFICGPLPFGNDQEDQLEIFRDILTGQLTFPDYVTDTDSINLIKRLLCRLPQGRIGCSINGFKDIKENSFFADFDWDRLAGRLLEPPLISKSETYAEDIDVKQIEQEEEDNANTEIDDENWDIDF.

Residues 1–33 (MDDDEIIPKKNHPSNERNKKKAILSHEDFTGED) form an autoinhibitory segment region. CNMP-binding domain stretches follow at residues 62 to 177 (VCST…FIDS), 180 to 279 (VFDM…VVLG), 299 to 402 (IFKQ…LGNN), and 422 to 521 (IFRY…LQII). Residues Lys117, Gly126, Glu127, Ala129, Arg136, and Ser137 each coordinate 3',5'-cyclic GMP. 3',5'-cyclic GMP contacts are provided by Arg477, Gly486, Glu487, Ala489, Arg496, and Thr497. Positions 545-802 (LLTERIIGRG…FKDIKENSFF (258 aa)) constitute a Protein kinase domain. ATP is bound by residues 551–559 (IGRGTFGIV) and Lys574. Residue Asp668 is the Proton acceptor of the active site. The region spanning 803 to 856 (ADFDWDRLAGRLLEPPLISKSETYAEDIDVKQIEQEEEDNANTEIDDENWDIDF) is the AGC-kinase C-terminal domain. Positions 837–856 (QEEEDNANTEIDDENWDIDF) are disordered.

Belongs to the protein kinase superfamily. AGC Ser/Thr protein kinase family. cGMP subfamily. In terms of assembly, monomer. Requires Mg(2+) as cofactor. In terms of processing, autophosphorylated.

Its subcellular location is the cytoplasm. The protein localises to the endoplasmic reticulum membrane. It catalyses the reaction L-seryl-[protein] + ATP = O-phospho-L-seryl-[protein] + ADP + H(+). The enzyme catalyses L-threonyl-[protein] + ATP = O-phospho-L-threonyl-[protein] + ADP + H(+). With respect to regulation, activated by cGMP. Not activated by cAMP. cGMP binding allosterically triggers a conformational change at the alpha C-helix of cGMP-binding domain 4, which bridges the regulatory and catalytic domains, causing the capping triad, composed of Arg-488, Gln-536 and Asp-537, to form and stabilize the active conformation. The cGMP-binding domains acts cooperatively to activate PKG. Functionally, serine/threonine protein kinase which acts as a downstream effector of the second messenger cGMP. Controls the release of Ca(2+) from intracellular stores by regulating phosphoinositide biosynthesis. Ca(2+) signals are essential for merozoite and sporozoite invasion and egress from host hepatocytes and erythrocytes, and, in the mosquito vector, for gametocyte activation, and ookinete and sporozoite motility. During the host liver stage, regulates the initial invasion of host hepatocytes by sporozoites by regulating sporozoite motility and microneme exocytosis. Following parasite development in the hepatocytes, required for the release of merosomes, a vesicle containing the mature merozoites. During the asexual blood stage, required for the progression from schizont to the ring stage following merozoite invasion of host erythrocytes and for merozoite egress. Regulates merozoite egress by promoting the release of exonemes and micronemes which contain proteins essential for egress. Phosphorylates CDPK1 predominantly at the late schizont stage; phosphorylation at 'Ser-64' regulates CDPK1 protein-protein interaction and phosphorylation at 'Thr-231' may regulate CDPK1 kinase activity. In the mosquito vector, required for the initiation of gametogenesis induced by xanthurenic acid, specifically the gametocyte differentiation from the crescent-shaped form to the spherical form. Required for the gliding motility of ookinetes to reach and penetrate the midgut epithelium by promoting Ca(2+)-mediated activation of CDPK1 and CDPK4. Also required for microneme secretion in ookinete by promoting Ca(2+)-mediated activation of CDPK3. This Plasmodium berghei (strain Anka) protein is cGMP-dependent protein kinase.